Here is a 376-residue protein sequence, read N- to C-terminus: Chaperone protein DnaJ (376 aa).

A J domain is found at 5–69 (DYYEVLGISK…QKRAQYDQYG (65 aa)). Residues 133–215 (GKDAEIEIPR…CHGKGRVTKT (83 aa)) form a CR-type zinc finger. 8 residues coordinate Zn(2+): Cys146, Cys149, Cys163, Cys166, Cys189, Cys192, Cys203, and Cys206. CXXCXGXG motif repeat units lie at residues 146–153 (CDTCHGSG), 163–170 (CSHCGGKG), 189–196 (CQYCNGTG), and 203–210 (CPTCHGKG).

Belongs to the DnaJ family. Homodimer. Zn(2+) serves as cofactor.

The protein resides in the cytoplasm. Participates actively in the response to hyperosmotic and heat shock by preventing the aggregation of stress-denatured proteins and by disaggregating proteins, also in an autonomous, DnaK-independent fashion. Unfolded proteins bind initially to DnaJ; upon interaction with the DnaJ-bound protein, DnaK hydrolyzes its bound ATP, resulting in the formation of a stable complex. GrpE releases ADP from DnaK; ATP binding to DnaK triggers the release of the substrate protein, thus completing the reaction cycle. Several rounds of ATP-dependent interactions between DnaJ, DnaK and GrpE are required for fully efficient folding. Also involved, together with DnaK and GrpE, in the DNA replication of plasmids through activation of initiation proteins. This is Chaperone protein DnaJ from Listeria monocytogenes serotype 4a (strain HCC23).